Consider the following 227-residue polypeptide: Ubiquitin-conjugating enzyme E2 6 (227 aa).

Residues 1-206 (MASKGAYKRL…NSKQSWVKSR (206 aa)) lie on the Cytoplasmic side of the membrane. Residues 5 to 163 (GAYKRLMKEY…FPELIDKNRE (159 aa)) form the UBC core domain. Cys-87 (glycyl thioester intermediate) is an active-site residue. The helical transmembrane segment at 207-225 (WSIAVLVFFALALARFFGA) threads the bilayer.

Belongs to the ubiquitin-conjugating enzyme family.

It localises to the endoplasmic reticulum membrane. It carries out the reaction S-ubiquitinyl-[E1 ubiquitin-activating enzyme]-L-cysteine + [E2 ubiquitin-conjugating enzyme]-L-cysteine = [E1 ubiquitin-activating enzyme]-L-cysteine + S-ubiquitinyl-[E2 ubiquitin-conjugating enzyme]-L-cysteine.. The protein operates within protein modification; protein ubiquitination. Catalyzes the covalent attachment of ubiquitin to other proteins. Functions in degradation of misfolded or regulated proteins localized in the endoplasmic reticulum (ER) lumen or membrane via the ubiquitin-proteasome system. Cognate E2 conjugating enzyme for the doa10 ubiquitin ligase complex, which is part of the ERAD-C pathway responsible for the rapid degradation of membrane proteins with misfolded cytoplasmic domains. In Schizosaccharomyces pombe (strain 972 / ATCC 24843) (Fission yeast), this protein is Ubiquitin-conjugating enzyme E2 6 (ubc6).